Here is an 88-residue protein sequence, read N- to C-terminus: Elongation factor 1-beta (88 aa).

It belongs to the EF-1-beta/EF-1-delta family.

In terms of biological role, promotes the exchange of GDP for GTP in EF-1-alpha/GDP, thus allowing the regeneration of EF-1-alpha/GTP that could then be used to form the ternary complex EF-1-alpha/GTP/AAtRNA. In Archaeoglobus fulgidus (strain ATCC 49558 / DSM 4304 / JCM 9628 / NBRC 100126 / VC-16), this protein is Elongation factor 1-beta (ef1b).